Reading from the N-terminus, the 258-residue chain is UDP-2,3-diacylglucosamine hydrolase (258 aa).

Mn(2+) is bound by residues Asp-15, His-17, Asp-48, Asn-88, and His-123. 88 to 89 (NR) lines the substrate pocket. Substrate is bound by residues Asp-131, Ser-169, Asn-173, Lys-176, and His-204. Positions 204 and 206 each coordinate Mn(2+).

Belongs to the LpxH family. It depends on Mn(2+) as a cofactor.

The protein localises to the cell inner membrane. The enzyme catalyses UDP-2-N,3-O-bis[(3R)-3-hydroxytetradecanoyl]-alpha-D-glucosamine + H2O = 2-N,3-O-bis[(3R)-3-hydroxytetradecanoyl]-alpha-D-glucosaminyl 1-phosphate + UMP + 2 H(+). The protein operates within glycolipid biosynthesis; lipid IV(A) biosynthesis; lipid IV(A) from (3R)-3-hydroxytetradecanoyl-[acyl-carrier-protein] and UDP-N-acetyl-alpha-D-glucosamine: step 4/6. Functionally, hydrolyzes the pyrophosphate bond of UDP-2,3-diacylglucosamine to yield 2,3-diacylglucosamine 1-phosphate (lipid X) and UMP by catalyzing the attack of water at the alpha-P atom. Involved in the biosynthesis of lipid A, a phosphorylated glycolipid that anchors the lipopolysaccharide to the outer membrane of the cell. The chain is UDP-2,3-diacylglucosamine hydrolase from Bordetella pertussis (strain Tohama I / ATCC BAA-589 / NCTC 13251).